The chain runs to 527 residues: Phosphoethanolamine transferase OpgE (527 aa).

Over methionine 1–glycine 33 the chain is Periplasmic. The chain crosses the membrane as a helical span at residues leucine 34–tryptophan 54. Residues arginine 55–lysine 62 lie on the Cytoplasmic side of the membrane. The chain crosses the membrane as a helical span at residues valine 63–glycine 83. Over alanine 84–threonine 106 the chain is Periplasmic. The chain crosses the membrane as a helical span at residues isoleucine 107–isoleucine 127. Residues arginine 128–leucine 146 are Cytoplasmic-facing. A helical membrane pass occupies residues valine 147 to phenylalanine 167. At lysine 168–proline 527 the chain is on the periplasmic side.

This sequence belongs to the phosphoethanolamine transferase family.

It localises to the cell inner membrane. It participates in glycan metabolism; osmoregulated periplasmic glucan (OPG) biosynthesis. In terms of biological role, catalyzes the addition of a phosphoethanolamine moiety to the osmoregulated periplasmic glucan (OPG) backbone. In Escherichia coli (strain K12), this protein is Phosphoethanolamine transferase OpgE (opgE).